Reading from the N-terminus, the 192-residue chain is MYQDLIRNELNEAAETLANFLKDDANIHAIQRAAVLLADSFKAGGKVLSCGNGGSHCDAMHFAEELTGRYRENRPGYPAIAISDVSHISCVGNDFGFNDIFSRYVEAVGCEGDVLLGISTSGNSANVIKAIAAAREKGMKVITLTGKDGGKMADTADIEIRVPHFGYADRIQEIHIKVIHILIQLIEKEMVK.

Residues 37-192 form the SIS domain; that stretch reads LADSFKAGGK…IQLIEKEMVK (156 aa). 52–54 lines the substrate pocket; the sequence is NGG. Residues His-61 and Glu-65 each contribute to the Zn(2+) site. Residues Glu-65, 93–94, 119–121, Ser-124, and Gln-172 each bind substrate; these read ND and STS. Zn(2+)-binding residues include Gln-172 and His-180.

Belongs to the SIS family. GmhA subfamily. Homotetramer. Zn(2+) is required as a cofactor.

The protein resides in the cytoplasm. It carries out the reaction 2 D-sedoheptulose 7-phosphate = D-glycero-alpha-D-manno-heptose 7-phosphate + D-glycero-beta-D-manno-heptose 7-phosphate. The protein operates within carbohydrate biosynthesis; D-glycero-D-manno-heptose 7-phosphate biosynthesis; D-glycero-alpha-D-manno-heptose 7-phosphate and D-glycero-beta-D-manno-heptose 7-phosphate from sedoheptulose 7-phosphate: step 1/1. Its function is as follows. Catalyzes the isomerization of sedoheptulose 7-phosphate in D-glycero-D-manno-heptose 7-phosphate. This is Phosphoheptose isomerase from Shigella dysenteriae serotype 1 (strain Sd197).